Reading from the N-terminus, the 653-residue chain is Protein SCARECROW (653 aa).

2 disordered regions span residues 1–69 (MAES…RRVS) and 193–265 (PSSS…AVQT). A compositionally biased stretch (low complexity) spans 17–31 (PLRTTSSGSSSSNNR). Over residues 32 to 41 (GPPPPPPPPL) the composition is skewed to pro residues. Positions 51 to 63 (EMSSNPDYNNSSR) are enriched in polar residues. Residues 209-230 (QISNNPSPPQQQQQHQQQQQQH) are compositionally biased toward low complexity. The segment covering 246–265 (STDAPPQPETVTATVPAVQT) has biased composition (polar residues). Positions 281-650 (QKQDEEGLHL…LSLLTASAWT (370 aa)) constitute a GRAS domain. The leucine repeat I (LRI) stretch occupies residues 288-351 (LHLLTLLLQC…LLNSCLGIYA (64 aa)). The LxCxE motif motif lies at 295–299 (LQCAE). The interval 370 to 435 (FQVFNGISPL…GGPPHVRLTG (66 aa)) is VHIID. Residues 401 to 405 (VHIID) carry the VHIID motif. The tract at residues 445–477 (ATGKRLSDFADKLGLPFEFCPLAEKVGNLDTER) is leucine repeat II (LRII). The PFYRE stretch occupies residues 486-573 (VAVHWLQHSL…QQLLSKEIRN (88 aa)). The segment at 576-650 (AVGGPSRSGE…LSLLTASAWT (75 aa)) is SAW.

Belongs to the GRAS family. Interacts with SHR, JKD and MGP. Interacts with SIEL. Interacts with RBR1 through its the LxCxE motif. Expressed in siliques, leaves and roots. Detected in the initial daughter cell before its asymmetric division and remains expressed only in the endodermal cell layer after the division. Expressed in the endodermis or starch sheath of the seedling hypocotyl, in the leaf bundle sheath cells and the root quiescent center.

Its subcellular location is the nucleus. In terms of biological role, transcription factor required for quiescent center cells specification and maintenance of surrounding stem cells, and for the asymmetric cell division involved in radial pattern formation in roots. Essential for cell division but not differentiation of the ground tissue. Also required for normal shoot gravitropism. Regulates the radial organization of the shoot axial organs. Binds to the promoter of MGP, NUC, RLK and SCL3. Restricts SHR movment and sequesters it into the nucleus of the endodermis. This Arabidopsis thaliana (Mouse-ear cress) protein is Protein SCARECROW.